Here is a 1451-residue protein sequence, read N- to C-terminus: Glutamate receptor ionotropic, NMDA 2A (1451 aa).

Residues 1–20 (MGMFVLLLYTFLYAGDLGHG) form the signal peptide. The Extracellular portion of the chain corresponds to 21–547 (AEKSFPVLNI…PSAFLEPFSA (527 aa)). N67 carries N-linked (GlcNAc...) asparagine glycosylation. C79 and C312 form a disulfide bridge. Zn(2+) contacts are provided by H120, D258, and D274. N-linked (GlcNAc...) asparagine glycosylation is found at N332, N372, N435, and N436. Intrachain disulfides connect C421–C447 and C428–C448. Positions 503, 505, and 510 each coordinate L-glutamate. The N-linked (GlcNAc...) asparagine glycan is linked to N533. A helical transmembrane segment spans residues 548 to 568 (SVWVMMFVMLLLVSAMAVFIF). Over 569-592 (EYFSPVGYNRNLAQGKDPHGPSFT) the chain is Cytoplasmic. Residues 591–612 (FTIGKAVWLLWGLVFNNSVPVQ) are pore-forming. The segment at residues 593–612 (IGKAVWLLWGLVFNNSVPVQ) is an intramembrane region (discontinuously helical). The Cytoplasmic segment spans residues 613 to 617 (NPKGT). The chain crosses the membrane as a helical span at residues 618–637 (TSKIIVSIWAFFAVIFLASY). Topologically, residues 638–808 (TANLAAFMIQ…VMSSQLDIDN (171 aa)) are extracellular. A glycan (N-linked (GlcNAc...) asparagine) is linked at N679. L-glutamate is bound by residues S681, T682, and D723. The cysteines at positions 737 and 792 are disulfide-linked. Residues 809–829 (MAGVFYMLAAAMALSLITFVW) form a helical membrane-spanning segment. Residues 830–1451 (EHLFYWKLRF…KKMPSLESDV (622 aa)) are Cytoplasmic-facing. Residues 1011-1022 (TLRQTQGSVNEN) are compositionally biased toward polar residues. Disordered regions lie at residues 1011-1080 (TLRQ…VSAK) and 1100-1165 (NRDK…GRLP). 3 stretches are compositionally biased toward basic and acidic residues: residues 1055-1073 (CHID…DNLK), 1100-1113 (NRDK…DKEP), and 1138-1149 (YQDHNDNYRKTE).

Belongs to the glutamate-gated ion channel (TC 1.A.10.1) family. In terms of assembly, heterotetramer. Forms heterotetrameric channels composed of two GluN1/zeta subunits (GRIN1), and two identical GluN2/epsilon subunits (GRIN2A, GRIN2B, GRIN2C or GRIN2D) or GluN3 subunits (GRIN3A or GRIN3B) (in vitro). In vivo, the subunit composition may depend on the expression levels of the different subunits.

The protein localises to the cell membrane. It is found in the postsynaptic cell membrane. The enzyme catalyses Ca(2+)(in) = Ca(2+)(out). The catalysed reaction is Na(+)(in) = Na(+)(out). It carries out the reaction K(+)(in) = K(+)(out). Component of N-methyl-D-aspartate (NMDA) receptors (NMDARs) that function as heterotetrameric, ligand-gated cation channels with high calcium permeability and voltage-dependent block by Mg(2+). MDARs participate in synaptic plasticity. Channel activation requires binding of the neurotransmitter L-glutamate to the GluN2 subunit, glycine binding to the GluN1 subunit, plus membrane depolarization to eliminate channel inhibition by Mg(2+). NMDARs mediate simultaneously the potasium efflux and the influx of calcium and sodium. Each GluN2 subunit confers differential attributes to channel properties, including activation, deactivation and desensitization kinetics, pH sensitivity, Ca2(+) permeability, and binding to allosteric modulators. Plays a role in dendritic branching in brain neurons and in synaptic plasticity. The sequence is that of Glutamate receptor ionotropic, NMDA 2A from Xenopus laevis (African clawed frog).